Reading from the N-terminus, the 804-residue chain is Elongation factor G, mitochondrial (804 aa).

The transit peptide at 1–9 (MVRPAQVRA) directs the protein to the mitochondrion. The tr-type G domain maps to 103–389 (SKVRNIGIAA…GVCDYLPNPS (287 aa)). Residues 112-119 (AHIDSGKT), 187-191 (DTPGH), and 241-244 (NKMD) each bind GTP.

The protein belongs to the TRAFAC class translation factor GTPase superfamily. Classic translation factor GTPase family. EF-G/EF-2 subfamily.

The protein localises to the mitochondrion. The protein operates within protein biosynthesis; polypeptide chain elongation. In terms of biological role, mitochondrial GTPase that catalyzes the GTP-dependent ribosomal translocation step during translation elongation. During this step, the ribosome changes from the pre-translocational (PRE) to the post-translocational (POST) state as the newly formed A-site-bound peptidyl-tRNA and P-site-bound deacylated tRNA move to the P and E sites, respectively. Catalyzes the coordinated movement of the two tRNA molecules, the mRNA and conformational changes in the ribosome. The sequence is that of Elongation factor G, mitochondrial (mef1) from Talaromyces stipitatus (strain ATCC 10500 / CBS 375.48 / QM 6759 / NRRL 1006) (Penicillium stipitatum).